We begin with the raw amino-acid sequence, 622 residues long: Probable potassium transport system protein Kup (622 aa).

Transmembrane regions (helical) follow at residues 8-28 (LAAL…TSVL), 50-70 (ILSI…VVLV), 103-123 (LAVG…TPAI), 137-157 (PHFK…LFAV), 168-188 (FFGP…LAHI), 203-223 (ALGF…AVVL), 247-267 (WFGV…ALLL), 285-305 (ALIP…QALI), 337-357 (IYMP…VVMF), 366-386 (AYGI…FFVI), 393-413 (PLAL…AFFA), and 419-439 (LFQG…LMMT).

This sequence belongs to the HAK/KUP transporter (TC 2.A.72) family.

The protein localises to the cell inner membrane. It carries out the reaction K(+)(in) + H(+)(in) = K(+)(out) + H(+)(out). In terms of biological role, transport of potassium into the cell. Likely operates as a K(+):H(+) symporter. The protein is Probable potassium transport system protein Kup of Verminephrobacter eiseniae (strain EF01-2).